A 249-amino-acid polypeptide reads, in one-letter code: 5-oxoprolinase subunit A (249 aa).

Belongs to the LamB/PxpA family. In terms of assembly, forms a complex composed of PxpA, PxpB and PxpC.

It carries out the reaction 5-oxo-L-proline + ATP + 2 H2O = L-glutamate + ADP + phosphate + H(+). Its function is as follows. Catalyzes the cleavage of 5-oxoproline to form L-glutamate coupled to the hydrolysis of ATP to ADP and inorganic phosphate. This is 5-oxoprolinase subunit A from Limosilactobacillus fermentum (strain NBRC 3956 / LMG 18251) (Lactobacillus fermentum).